A 333-amino-acid polypeptide reads, in one-letter code: Biotin synthase (333 aa).

A Radical SAM core domain is found at 47-276 (ADIQRASLLS…KARVRLSAGR (230 aa)). The [4Fe-4S] cluster site is built by Cys-62, Cys-66, and Cys-69. The [2Fe-2S] cluster site is built by Cys-107, Cys-139, Cys-199, and Arg-271.

This sequence belongs to the radical SAM superfamily. Biotin synthase family. Homodimer. [4Fe-4S] cluster is required as a cofactor. The cofactor is [2Fe-2S] cluster.

It carries out the reaction (4R,5S)-dethiobiotin + (sulfur carrier)-SH + 2 reduced [2Fe-2S]-[ferredoxin] + 2 S-adenosyl-L-methionine = (sulfur carrier)-H + biotin + 2 5'-deoxyadenosine + 2 L-methionine + 2 oxidized [2Fe-2S]-[ferredoxin]. It functions in the pathway cofactor biosynthesis; biotin biosynthesis; biotin from 7,8-diaminononanoate: step 2/2. Functionally, catalyzes the conversion of dethiobiotin (DTB) to biotin by the insertion of a sulfur atom into dethiobiotin via a radical-based mechanism. The chain is Biotin synthase from Methylobacterium nodulans (strain LMG 21967 / CNCM I-2342 / ORS 2060).